The chain runs to 1687 residues: Protein TOPAZ1 (1687 aa).

4 disordered regions span residues 1-131 (MRRP…QPGF), 319-339 (EESSVGRKPRKRMKLSEKADE), 596-632 (LSRSGSEVISNTTEDTQLTSDTQSLTGNKKRDRGNLT), and 880-916 (TSEVPRISQEPNVPGEHQSTDSKYVETPVKKEPSDDL). Gly residues predominate over residues 31-41 (GAAGGCGPEAG). Residues 80–113 (RRVEGRRGQVSPSDRRGLEAAKEAEFPLQTERHT) are compositionally biased toward basic and acidic residues. Residues 598–622 (RSGSEVISNTTEDTQLTSDTQSLTG) show a composition bias toward polar residues. Positions 897 to 916 (QSTDSKYVETPVKKEPSDDL) are enriched in basic and acidic residues.

The protein localises to the cytoplasm. It localises to the cytosol. Functionally, important for normal spermatogenesis and male fertility. Specifically required for progression to the post-meiotic stages of spermatocyte development. Seems to be necessary for normal expression levels of a number of testis-expressed gene transcripts, although its role in this process is unclear. The sequence is that of Protein TOPAZ1 (TOPAZ1) from Macaca fascicularis (Crab-eating macaque).